Here is a 209-residue protein sequence, read N- to C-terminus: Uracil phosphoribosyltransferase (209 aa).

5-phospho-alpha-D-ribose 1-diphosphate-binding positions include Arg-79, Arg-104, and 131–139 (DPMLATGGS). Uracil-binding positions include Ile-194 and 199–201 (GDA). 5-phospho-alpha-D-ribose 1-diphosphate is bound at residue Asp-200.

This sequence belongs to the UPRTase family. The cofactor is Mg(2+).

The catalysed reaction is UMP + diphosphate = 5-phospho-alpha-D-ribose 1-diphosphate + uracil. It participates in pyrimidine metabolism; UMP biosynthesis via salvage pathway; UMP from uracil: step 1/1. Its activity is regulated as follows. Allosterically activated by GTP. Catalyzes the conversion of uracil and 5-phospho-alpha-D-ribose 1-diphosphate (PRPP) to UMP and diphosphate. The protein is Uracil phosphoribosyltransferase of Geobacillus sp. (strain WCH70).